The following is an 824-amino-acid chain: MASYPGPGKSKAKYPFKKRASLQASAAAPEARSGLGASPLQSARSLPGTAPCLKHFPLDLRTSMDGKCKEIAEELFSRSLAESELRSAPYEFPEESPIEQLEERRQRLERQISQDVKLEPDILLRAKQDFLKTDSDSDLQLYKEQGEGQGDRGLWERDVVLEREFQRVIISGEEKCGVPFTDLLDAAKSVVRALFIREKYMALSLQSFCPTTRRYLQQLAEKPLETRTYEQSPDTPVSADAPVHPPALEQHPYEHCEPSTMPGDLGLGLRMVRGVVHVYTRRDPDEHCPEVELPYPDLQEFVADVNVLMALIINGPIKSFCYRRLQYLSSKFQMHVLLNEMKELAAQKKVPHRDFYNIRKVDTHIHASSCMNQKHLLRFIKRAMKRHLEEIVHVEQGREQTLREVFESMNLTAYDLSVDTLDVHADRNTFHRFDKFNAKYNPIGESVLREIFIKTDNKISGKYFAHIIKEVMSDLEESKYQNAELRLSIYGRSRDEWDKLARWAVNHRVHSPNVRWLVQVPRLFDVYRTKGQLANFQEMLENIFLPLFEATVHPASHPELHLFLEHVDGFDSVDDESKPENHVFNLESPLPEAWVEEDNPPYAYYLYYTFANMAMLNHLRRQRGFHTFVLRPHCGEAGPIHHLVSAFMLAENISHGLLLRKAPVLQYLYYLAQIGIAMSPLSNNSLFLSYHRNPLPEYLSRGLMVSLSTDDPLQFHFTKEPLMEEYSIATQVWKLSSCDMCELARNSVLMSGFSHKVKSHWLGPNYTKEGPEGNDIRRTNVPDIRVGYRYETLCQELALITQAVQSEMLETIPEEVGIVMSPGP.

The tract at residues 1–43 (MASYPGPGKSKAKYPFKKRASLQASAAAPEARSGLGASPLQSA) is disordered. Residues 10 to 20 (SKAKYPFKKRA) show a composition bias toward basic residues. Residue Ser-21 is modified to Phosphoserine. Over residues 21 to 33 (SLQASAAAPEARS) the composition is skewed to low complexity. Arg-44 is modified (omega-N-methylarginine). Phosphoserine occurs at positions 45, 63, and 79. Tyr-90 bears the Phosphotyrosine mark. Phosphoserine occurs at positions 96 and 113. Thr-133 carries the post-translational modification Phosphothreonine. 2 positions are modified to phosphoserine: Ser-135 and Ser-137. Zn(2+) contacts are provided by His-364 and His-366. Residues His-366 and 435-440 (KFNAKY) contribute to the substrate site. Residue His-633 coordinates Zn(2+). Glu-636 contributes to the substrate binding site. His-655 acts as the Proton acceptor in catalysis. Asp-710 is a Zn(2+) binding site. 711 to 714 (DPLQ) contributes to the substrate binding site.

This sequence belongs to the metallo-dependent hydrolases superfamily. Adenosine and AMP deaminases family. In terms of assembly, homotetramer. It depends on Zn(2+) as a cofactor.

It catalyses the reaction AMP + H2O + H(+) = IMP + NH4(+). Its pathway is purine metabolism; IMP biosynthesis via salvage pathway; IMP from AMP: step 1/1. Functionally, AMP deaminase plays a critical role in energy metabolism. Catalyzes the deamination of AMP to IMP and plays an important role in the purine nucleotide cycle. This Rattus norvegicus (Rat) protein is AMP deaminase 2.